The sequence spans 891 residues: Aconitate hydratase A (891 aa).

[4Fe-4S] cluster-binding residues include Cys-435, Cys-501, and Cys-504.

It belongs to the aconitase/IPM isomerase family. As to quaternary structure, monomer. It depends on [4Fe-4S] cluster as a cofactor.

It catalyses the reaction citrate = D-threo-isocitrate. The enzyme catalyses (2S,3R)-3-hydroxybutane-1,2,3-tricarboxylate = 2-methyl-cis-aconitate + H2O. It participates in carbohydrate metabolism; tricarboxylic acid cycle; isocitrate from oxaloacetate: step 2/2. Its pathway is organic acid metabolism; propanoate degradation. Functionally, involved in the catabolism of short chain fatty acids (SCFA) via the tricarboxylic acid (TCA)(acetyl degradation route) and the 2-methylcitrate cycle I (propionate degradation route). Catalyzes the reversible isomerization of citrate to isocitrate via cis-aconitate. Also catalyzes the hydration of 2-methyl-cis-aconitate to yield (2R,3S)-2-methylisocitrate. The (2S,3S)-2-methylcitrate (2-MC) is a very poor substrate. The apo form of AcnA functions as a RNA-binding regulatory protein. In Salmonella typhimurium (strain LT2 / SGSC1412 / ATCC 700720), this protein is Aconitate hydratase A (acnA).